The primary structure comprises 197 residues: Large ribosomal subunit protein bL9c (197 aa).

Residues 1-42 (MASSTALSLSWSSSPCWSHSFNGGANETLKVSERRFNFEVVS) constitute a chloroplast transit peptide.

This sequence belongs to the bacterial ribosomal protein bL9 family. In terms of assembly, part of the 50S ribosomal subunit.

It localises to the plastid. Its subcellular location is the chloroplast. Binds to the 23S rRNA. The sequence is that of Large ribosomal subunit protein bL9c (RPL9) from Arabidopsis thaliana (Mouse-ear cress).